The chain runs to 232 residues: Ribonuclease 3 (232 aa).

The RNase III domain maps to 5-134 (NDAISKIIDY…LIGAIYIDGG (130 aa)). E47 is a Mg(2+) binding site. D51 is a catalytic residue. Residues N120 and E123 each contribute to the Mg(2+) site. The active site involves E123. The DRBM domain maps to 159–228 (DPKTSLQEWT…AELMLEKIGK (70 aa)).

The protein belongs to the ribonuclease III family. As to quaternary structure, homodimer. Mg(2+) is required as a cofactor.

Its subcellular location is the cytoplasm. It carries out the reaction Endonucleolytic cleavage to 5'-phosphomonoester.. Its function is as follows. Digests double-stranded RNA. Involved in the processing of primary rRNA transcript to yield the immediate precursors to the large and small rRNAs (23S and 16S). Processes some mRNAs, and tRNAs when they are encoded in the rRNA operon. Processes pre-crRNA and tracrRNA of type II CRISPR loci if present in the organism. The chain is Ribonuclease 3 from Wolbachia pipientis wMel.